The sequence spans 239 residues: tRNA (guanine-N(7)-)-methyltransferase (239 aa).

S-adenosyl-L-methionine is bound by residues E69, E94, D121, and D144. D144 is a catalytic residue. Position 148 (K148) interacts with substrate. The segment at 150–155 (RHNKRR) is interaction with RNA. Substrate-binding positions include D180 and 217–220 (TKFE).

The protein belongs to the class I-like SAM-binding methyltransferase superfamily. TrmB family. Monomer.

It carries out the reaction guanosine(46) in tRNA + S-adenosyl-L-methionine = N(7)-methylguanosine(46) in tRNA + S-adenosyl-L-homocysteine. It functions in the pathway tRNA modification; N(7)-methylguanine-tRNA biosynthesis. In terms of biological role, catalyzes the formation of N(7)-methylguanine at position 46 (m7G46) in tRNA. This is tRNA (guanine-N(7)-)-methyltransferase from Salmonella typhi.